A 230-amino-acid polypeptide reads, in one-letter code: Cytidylate kinase (230 aa).

14–22 (GPSGVGKSS) is an ATP binding site.

It belongs to the cytidylate kinase family. Type 1 subfamily.

It localises to the cytoplasm. It carries out the reaction CMP + ATP = CDP + ADP. It catalyses the reaction dCMP + ATP = dCDP + ADP. This chain is Cytidylate kinase, found in Buchnera aphidicola subsp. Baizongia pistaciae (strain Bp).